The chain runs to 135 residues: Ribonuclease P protein component (135 aa).

Belongs to the RnpA family. Consists of a catalytic RNA component (M1 or rnpB) and a protein subunit.

It catalyses the reaction Endonucleolytic cleavage of RNA, removing 5'-extranucleotides from tRNA precursor.. RNaseP catalyzes the removal of the 5'-leader sequence from pre-tRNA to produce the mature 5'-terminus. It can also cleave other RNA substrates such as 4.5S RNA. The protein component plays an auxiliary but essential role in vivo by binding to the 5'-leader sequence and broadening the substrate specificity of the ribozyme. The protein is Ribonuclease P protein component of Pseudomonas aeruginosa (strain LESB58).